A 140-amino-acid polypeptide reads, in one-letter code: Putative pre-16S rRNA nuclease (140 aa).

It belongs to the YqgF nuclease family.

It localises to the cytoplasm. Functionally, could be a nuclease involved in processing of the 5'-end of pre-16S rRNA. This chain is Putative pre-16S rRNA nuclease, found in Edwardsiella ictaluri (strain 93-146).